A 787-amino-acid polypeptide reads, in one-letter code: MRAQWPGQLWAALLALGALAGVVVGESNICTTRGVNSCQQCLAVSPVCAWCSDETLSQGSPRCNLKENLLKDNCAPESIEFPVSEAQILEARPLSSKGSGSSAQITQVSPQRIALRLRPDDSKIFSLQVRQVEDYPVDIYYLMDLSFSMKDDLSSIQTLGTKLASQMRKLTSNLRIGFGAFVDKPVSPYMYISPPQAIKNPCYNMKNACLPMFGYKHVLTLTDQVSRFNEEVKKQSVSRNRDAPEGGFDAIMQATVCDEKIGWRNDASHLLVFTTDAKTHIALDGRLAGIVLPNDGHCHIGTDNHYSASTTMDYPSLGLMTEKLSQKNINLIFAVTENVVSLYQNYSELIPGTTVGVLSDDSSNVLQLIVDAYGKIRSKVELEVRDLPEELSLSFNATCLNNEVIPGLKSCVGLKIGDTVSFSIEAKVRGCPQEKEQSFTIKPVGFKDSLTVQVTFDCDCACQAFAQPSSPRCNNGNGTFECGVCRCDQGWLGSMCECSEEDYRPSQQEECSPKEGQPICSQRGECLCGQCVCHSSDFGKITGKYCECDDFSCVRYKGEMCSGHGQCNCGDCVCDSDWTGYYCNCTTRTDTCMSTNGLLCSGRGNCECGSCVCVQPGSYGDTCEKCPTCPDACSFKKECVECKKFNRGTLHEENTCSRYCRDDIEQVKELTDTGKNAVNCTYKNEDDCVVRFQYYEDTSGRAVLYVVEEPECPKGPDILVVLLSVMGAILLIGLATLLIWKLLITIHDRKEFAKFEEERARAKWDTANNPLYKEATSTFTNITYRGT.

Positions 1-25 (MRAQWPGQLWAALLALGALAGVVVG) are cleaved as a signal peptide. Residues 26 to 717 (ESNICTTRGV…EEPECPKGPD (692 aa)) are Extracellular-facing. Residues 29–75 (ICTTRGVNSCQQCLAVSPVCAWCSDETLSQGSPRCNLKENLLKDNCA) form the PSI domain. Cystine bridges form between C30/C48, C38/C460, C41/C63, C51/C74, C202/C209, C257/C298, C399/C411, C431/C458, C462/C482, C473/C485, C487/C496, C498/C528, C511/C526, C520/C531, C533/C546, C548/C569, C553/C567, C561/C572, and C574/C583. Residues 134–376 (DYPVDIYYLM…QLIVDAYGKI (243 aa)) form the VWFA domain. Positions 146 and 148 each coordinate Mg(2+). Ca(2+)-binding residues include S148, D151, D152, and D183. The interval 202 to 209 (CYNMKNAC) is CX3CL1-binding. Residues 202–209 (CYNMKNAC) form an involved in CX3CL1-, NRG1-, FGF1- and IGF1-binding region. Ca(2+)-binding residues include N240, D242, P244, E245, and D276. Mg(2+) is bound at residue E245. The segment at 292–312 (LPNDGHCHIGTDNHYSASTTM) is CX3CL1-binding. 2 N-linked (GlcNAc...) asparagine glycosylation sites follow: N345 and N396. 4 I-EGF domains span residues 462 to 497 (CQAF…SMCE), 498 to 547 (CSEE…KYCE), 548 to 584 (CDDF…YYCN), and 585 to 624 (CTTR…DTCE). N-linked (GlcNAc...) asparagine glycosylation occurs at N477. A glycan (N-linked (GlcNAc...) asparagine) is linked at N584. Disulfide bonds link C585–C608, C592–C606, C600–C611, C613–C623, C626–C629, C633–C680, C639–C660, C642–C656, and C688–C712. A glycan (N-linked (GlcNAc...) asparagine) is linked at N679. The chain crosses the membrane as a helical span at residues 718–740 (ILVVLLSVMGAILLIGLATLLIW). The Cytoplasmic portion of the chain corresponds to 741-787 (KLLITIHDRKEFAKFEEERARAKWDTANNPLYKEATSTFTNITYRGT). T766 is modified (phosphothreonine). At Y772 the chain carries Phosphotyrosine. Positions 776–782 (TSTFTNI) match the LIR motif. T778 is modified (phosphothreonine). Y784 carries the phosphotyrosine modification.

Belongs to the integrin beta chain family. As to quaternary structure, heterodimer of an alpha and a beta subunit. Beta-3 (ITGB3) associates with either alpha-IIB (ITGA2B) or alpha-V (ITGAV). Interacts with FLNB and COMP. Interacts with PDIA6 following platelet stimulation. Interacts with SYK; upon activation by ITGB3 promotes platelet adhesion. Interacts with MYO10. Interacts with DAB2. Interacts with FERMT2. Integrin ITGAV:ITGB3 interacts with FBLN5 (via N-terminus). Interacts with EMP2; regulates the levels of the heterodimer ITGA5:ITGB3 integrin expression on the plasma membrane. ITGAV:ITGB3 interacts with CCN3. ITGAV:ITGB3 and ITGA2B:ITGB3 interact with SELP (via C-type lectin domain); the interaction mediates cell-cell interaction and adhesion. ITGAV:ITGB3 interacts with AGRA2. ITGAV:ITGB3 is found in a ternary complex with CX3CR1 and CX3CL1. ITGAV:ITGB3 is found in a ternary complex with NRG1 and ERBB3. ITGAV:ITGB3 is found in a ternary complex with FGF1 and FGFR1. ITGAV:ITGB3 interacts with FGF2; it is likely that FGF2 can simultaneously bind ITGAV:ITGB3 and FGF receptors. ITGAV:ITGB3 binds to IL1B. ITGAV:ITGB3 is found in a ternary complex with IGF1 and IGF1R. ITGAV:ITGB3 interacts with IGF2. ITGAV:ITGB3 interacts with FBN1. ITGAV:ITGB3 interacts with CD9, CD81 and CD151 (via second extracellular domain). Interacts (via the allosteric site (site 2)) with CXCL12 in a CXCR4-independent manner. Interacts with MXRA8/DICAM; the interaction inhibits ITGAV:ITGB3 heterodimer formation. ITGAV:ITGB3 interacts with PTN. Forms a complex with PTPRZ1 and PTN that stimulates endothelial cell migration through ITGB3 Tyr-772 phosphorylation. ITGAV:ITGB3 interacts with SLC6A4. Interacts with SLC6A4 (via C-terminus); this interaction regulates SLC6A4 trafficking. ITGA2B:ITGB3 interacts with PPIA/CYPA; the interaction is ROS and PPIase activity-dependent and is increased in the presence of thrombin. Interacts with tensin TNS3; TNS3 also interacts with PEAK1, thus acting as an adapter molecule to bridge the association of PEAK1 with ITGB3. Interacts with TM4SF19. Phosphorylated on tyrosine residues in response to thrombin-induced platelet aggregation. Probably involved in outside-in signaling.

It is found in the cell membrane. Its subcellular location is the cell projection. It localises to the lamellipodium membrane. The protein resides in the cell junction. The protein localises to the focal adhesion. It is found in the postsynaptic cell membrane. Its subcellular location is the synapse. Its function is as follows. Integrin alpha-V/beta-3 (ITGAV:ITGB3) is a receptor for cytotactin, fibronectin, laminin, matrix metalloproteinase-2, osteopontin, osteomodulin, prothrombin, thrombospondin, vitronectin and von Willebrand factor. Integrin alpha-IIB/beta-3 (ITGA2B:ITGB3) is a receptor for fibronectin, fibrinogen, plasminogen, prothrombin, thrombospondin and vitronectin. Integrins alpha-IIB/beta-3 and alpha-V/beta-3 recognize the sequence R-G-D in a wide array of ligands. Integrin alpha-IIB/beta-3 recognizes the sequence H-H-L-G-G-G-A-K-Q-A-G-D-V in fibrinogen gamma chain. Following activation integrin alpha-IIB/beta-3 brings about platelet/platelet interaction through binding of soluble fibrinogen. This step leads to rapid platelet aggregation which physically plugs ruptured endothelial surfaces. Fibrinogen binding enhances SELP expression in activated platelets. ITGAV:ITGB3 binds to fractalkine (CX3CL1) and acts as its coreceptor in CX3CR1-dependent fractalkine signaling. ITGAV:ITGB3 binds to NRG1 (via EGF domain) and this binding is essential for NRG1-ERBB signaling. ITGAV:ITGB3 binds to FGF1 and this binding is essential for FGF1 signaling. ITGAV:ITGB3 binds to FGF2 and this binding is essential for FGF2 signaling. ITGAV:ITGB3 binds to IGF1 and this binding is essential for IGF1 signaling. ITGAV:ITGB3 binds to IGF2 and this binding is essential for IGF2 signaling. ITGAV:ITGB3 binds to IL1B and this binding is essential for IL1B signaling. ITGAV:ITGB3 binds to PLA2G2A via a site (site 2) which is distinct from the classical ligand-binding site (site 1) and this induces integrin conformational changes and enhanced ligand binding to site 1. ITGAV:ITGB3 acts as a receptor for fibrillin-1 (FBN1) and mediates R-G-D-dependent cell adhesion to FBN1. ITGAV:ITGB3 binds to the Lilrb4a/Gp49b receptor and enhances the Lilrb4a-mediated inhibition of mast cell activation. ITGAV:ITGB3 also suppresses marginal zone B cell antibody production through its interaction with Lilrb4a. In brain, plays a role in synaptic transmission and plasticity. Involved in the regulation of the serotonin neurotransmission, is required to localize to specific compartments within the synapse the serotonin receptor SLC6A4 and for an appropriate reuptake of serotonin. Controls excitatory synaptic strength by regulating GRIA2-containing AMPAR endocytosis, which affects AMPAR abundance and composition. ITGAV:ITGB3 act as a receptor for CD40LG. ITGAV:ITGB3 acts as a receptor for IBSP and promotes cell adhesion and migration to IBSP. This is Integrin beta-3 from Mus musculus (Mouse).